The sequence spans 421 residues: 3-isopropylmalate dehydratase large subunit (421 aa).

3 residues coordinate [4Fe-4S] cluster: Cys-302, Cys-362, and Cys-365.

The protein belongs to the aconitase/IPM isomerase family. LeuC type 2 subfamily. In terms of assembly, heterodimer of LeuC and LeuD. [4Fe-4S] cluster serves as cofactor.

The catalysed reaction is (2R,3S)-3-isopropylmalate = (2S)-2-isopropylmalate. Its pathway is amino-acid biosynthesis; L-leucine biosynthesis; L-leucine from 3-methyl-2-oxobutanoate: step 2/4. Its function is as follows. Catalyzes the isomerization between 2-isopropylmalate and 3-isopropylmalate, via the formation of 2-isopropylmaleate. This is 3-isopropylmalate dehydratase large subunit from Campylobacter curvus (strain 525.92).